The sequence spans 400 residues: Delta(12) fatty acid desaturase (400 aa).

The helical transmembrane segment at 91-111 threads the bilayer; the sequence is LAWPAYWIMQGIVCTGIWVLA. The Histidine box-1 signature appears at 112 to 116; the sequence is HECGH. Positions 148–152 match the Histidine box-2 motif; that stretch reads HSKHH. The next 3 membrane-spanning stretches (helical) occupy residues 199–219, 245–265, and 277–297; these read IVTL…YLIM, FFDI…LIYA, and YYII…FLQH. The Histidine box-3 motif lies at 339–343; that stretch reads HVAHH.

Belongs to the fatty acid desaturase type 1 family.

It localises to the membrane. It carries out the reaction (9Z)-octadecenoyl-CoA + 2 Fe(II)-[cytochrome b5] + O2 + 2 H(+) = (9Z,12Z)-octadecadienoyl-CoA + 2 Fe(III)-[cytochrome b5] + 2 H2O. The catalysed reaction is (9Z)-hexadecenoyl-CoA + 2 Fe(II)-[cytochrome b5] + O2 + 2 H(+) = (9Z,12Z)-hexadecadienoyl-CoA + 2 Fe(III)-[cytochrome b5] + 2 H2O. It participates in lipid metabolism; polyunsaturated fatty acid biosynthesis. Functionally, catalyzes the desaturation of oleic acid (Delta(9)-18:1) to linoleic acid (Delta(9), Delta(12)-18:2). The protein is Delta(12) fatty acid desaturase of Mortierella isabellina (Filamentous fungus).